The primary structure comprises 287 residues: MTMPYYASPEQLMRDKSEYARKGISRGRSVAVVTYADGVLFIAENPSSTLHKVGELYDRIGFAAVGRYSEFESLRVAGVRLADVRGYSYNRRDVTGRVIANAYAQTLGEVFTQQMKPFEVELCVAEVGETPETDQLYRLTFDGSVVDEPDFVVMGGQAEAVSANLREHFLPGMGLAEALRVGVQALSAVSPATSAGNGGPALLTAEQLEVAVLDRRRPKRAFRRIAGAALRPLLDRQEEDGVVAGEEPHTAAHAPSVPQPGAPAGLGDPGAPDTGGTAGSGGEAPTT.

The segment at 241-287 (GVVAGEEPHTAAHAPSVPQPGAPAGLGDPGAPDTGGTAGSGGEAPTT) is disordered. The span at 262–275 (APAGLGDPGAPDTG) shows a compositional bias: low complexity. Residues 276-287 (GTAGSGGEAPTT) are compositionally biased toward gly residues.

It belongs to the peptidase T1A family. In terms of assembly, the 20S proteasome core is composed of 14 alpha and 14 beta subunits that assemble into four stacked heptameric rings, resulting in a barrel-shaped structure. The two inner rings, each composed of seven catalytic beta subunits, are sandwiched by two outer rings, each composed of seven alpha subunits. The catalytic chamber with the active sites is on the inside of the barrel. Has a gated structure, the ends of the cylinder being occluded by the N-termini of the alpha-subunits. Is capped by the proteasome-associated ATPase, ARC.

It localises to the cytoplasm. The protein operates within protein degradation; proteasomal Pup-dependent pathway. Its activity is regulated as follows. The formation of the proteasomal ATPase ARC-20S proteasome complex, likely via the docking of the C-termini of ARC into the intersubunit pockets in the alpha-rings, may trigger opening of the gate for substrate entry. Interconversion between the open-gate and close-gate conformations leads to a dynamic regulation of the 20S proteasome proteolysis activity. Component of the proteasome core, a large protease complex with broad specificity involved in protein degradation. The chain is Proteasome subunit alpha from Geodermatophilus obscurus (strain ATCC 25078 / DSM 43160 / JCM 3152 / CCUG 61914 / KCC A-0152 / KCTC 9177 / NBRC 13315 / NRRL B-3577 / G-20).